Reading from the N-terminus, the 146-residue chain is Hemoglobin subunit beta (146 aa).

Positions 2–146 constitute a Globin domain; sequence HWSAEEKQLI…VAHALARKYH (145 aa). Residues His63 and His92 each contribute to the heme b site.

Belongs to the globin family. As to quaternary structure, heterotetramer of two alpha chains and two beta chains. As to expression, red blood cells.

In terms of biological role, involved in oxygen transport from the lung to the various peripheral tissues. The polypeptide is Hemoglobin subunit beta (HBB) (Phoenicopterus ruber (American flamingo)).